The chain runs to 315 residues: Malate dehydrogenase (315 aa).

NAD(+)-binding positions include 10–15 and Asp-34; that span reads GSGFTG. Residues Arg-85 and Arg-91 each coordinate substrate. NAD(+)-binding positions include Asn-98 and 121–123; that span reads LTN. 2 residues coordinate substrate: Asn-123 and Arg-154. Catalysis depends on His-178, which acts as the Proton acceptor.

The protein belongs to the LDH/MDH superfamily. MDH type 3 family.

The catalysed reaction is (S)-malate + NAD(+) = oxaloacetate + NADH + H(+). In terms of biological role, catalyzes the reversible oxidation of malate to oxaloacetate. The chain is Malate dehydrogenase from Symbiobacterium thermophilum (strain DSM 24528 / JCM 14929 / IAM 14863 / T).